Consider the following 450-residue polypeptide: ATP-dependent protease ATPase subunit HslU (450 aa).

Residues valine 29, glycine 71–glutamate 76, aspartate 261, glutamate 328, and arginine 400 each bind ATP.

This sequence belongs to the ClpX chaperone family. HslU subfamily. As to quaternary structure, a double ring-shaped homohexamer of HslV is capped on each side by a ring-shaped HslU homohexamer. The assembly of the HslU/HslV complex is dependent on binding of ATP.

It is found in the cytoplasm. In terms of biological role, ATPase subunit of a proteasome-like degradation complex; this subunit has chaperone activity. The binding of ATP and its subsequent hydrolysis by HslU are essential for unfolding of protein substrates subsequently hydrolyzed by HslV. HslU recognizes the N-terminal part of its protein substrates and unfolds these before they are guided to HslV for hydrolysis. In Rickettsia akari (strain Hartford), this protein is ATP-dependent protease ATPase subunit HslU.